Reading from the N-terminus, the 51-residue chain is Large ribosomal subunit protein bL33 (51 aa).

It belongs to the bacterial ribosomal protein bL33 family.

This is Large ribosomal subunit protein bL33 from Francisella tularensis subsp. tularensis (strain FSC 198).